Reading from the N-terminus, the 103-residue chain is Large ribosomal subunit protein P1 (103 aa).

A disordered region spans residues 66 to 103; it reads PAAGAPAAGAAGGAVEEKKEEKKAESEDESDDDMGLFD. The segment covering 80–90 has biased composition (basic and acidic residues); the sequence is VEEKKEEKKAE. Positions 91–103 are enriched in acidic residues; the sequence is SEDESDDDMGLFD.

This sequence belongs to the eukaryotic ribosomal protein P1/P2 family. P1 and P2 exist as dimers at the large ribosomal subunit.

In terms of biological role, plays an important role in the elongation step of protein synthesis. This is Large ribosomal subunit protein P1 from Polyorchis penicillatus (Hydromedusa).